Here is a 371-residue protein sequence, read N- to C-terminus: Carbamoyl phosphate synthase small chain (371 aa).

Positions 1 to 182 (MGVHKKGYLV…KNPIVHTPKN (182 aa)) are CPSase. Positions 49, 235, and 237 each coordinate L-glutamine. The Glutamine amidotransferase type-1 domain maps to 186–371 (RVVVLDLGVK…EFVKILEGRK (186 aa)). Cysteine 263 (nucleophile) is an active-site residue. Residues leucine 264, glutamine 267, asparagine 305, glycine 307, and tyrosine 308 each coordinate L-glutamine. Active-site residues include histidine 346 and glutamate 348.

It belongs to the CarA family. As to quaternary structure, composed of two chains; the small (or glutamine) chain promotes the hydrolysis of glutamine to ammonia, which is used by the large (or ammonia) chain to synthesize carbamoyl phosphate. Tetramer of heterodimers (alpha,beta)4.

It carries out the reaction hydrogencarbonate + L-glutamine + 2 ATP + H2O = carbamoyl phosphate + L-glutamate + 2 ADP + phosphate + 2 H(+). The enzyme catalyses L-glutamine + H2O = L-glutamate + NH4(+). It functions in the pathway amino-acid biosynthesis; L-arginine biosynthesis; carbamoyl phosphate from bicarbonate: step 1/1. Its pathway is pyrimidine metabolism; UMP biosynthesis via de novo pathway; (S)-dihydroorotate from bicarbonate: step 1/3. Small subunit of the glutamine-dependent carbamoyl phosphate synthetase (CPSase). CPSase catalyzes the formation of carbamoyl phosphate from the ammonia moiety of glutamine, carbonate, and phosphate donated by ATP, constituting the first step of 2 biosynthetic pathways, one leading to arginine and/or urea and the other to pyrimidine nucleotides. The small subunit (glutamine amidotransferase) binds and cleaves glutamine to supply the large subunit with the substrate ammonia. This Pyrococcus furiosus (strain ATCC 43587 / DSM 3638 / JCM 8422 / Vc1) protein is Carbamoyl phosphate synthase small chain.